Consider the following 203-residue polypeptide: Dephospho-CoA kinase (203 aa).

The DPCK domain occupies 6–203 (ILGLTGGIGS…FYLTLRGGRA (198 aa)). 14–19 (GSGKSA) serves as a coordination point for ATP.

The protein belongs to the CoaE family.

The protein localises to the cytoplasm. The enzyme catalyses 3'-dephospho-CoA + ATP = ADP + CoA + H(+). It functions in the pathway cofactor biosynthesis; coenzyme A biosynthesis; CoA from (R)-pantothenate: step 5/5. Functionally, catalyzes the phosphorylation of the 3'-hydroxyl group of dephosphocoenzyme A to form coenzyme A. The polypeptide is Dephospho-CoA kinase (Pseudomonas aeruginosa (strain ATCC 15692 / DSM 22644 / CIP 104116 / JCM 14847 / LMG 12228 / 1C / PRS 101 / PAO1)).